Consider the following 419-residue polypeptide: UDP-N-acetylglucosamine 1-carboxyvinyltransferase (419 aa).

Residue 22-23 (KN) participates in phosphoenolpyruvate binding. Arg95 is a binding site for UDP-N-acetyl-alpha-D-glucosamine. Cys119 serves as the catalytic Proton donor. Cys119 is modified (2-(S-cysteinyl)pyruvic acid O-phosphothioketal). UDP-N-acetyl-alpha-D-glucosamine-binding positions include 164-167 (KVSV), Asp308, and Ile330.

It belongs to the EPSP synthase family. MurA subfamily.

Its subcellular location is the cytoplasm. It catalyses the reaction phosphoenolpyruvate + UDP-N-acetyl-alpha-D-glucosamine = UDP-N-acetyl-3-O-(1-carboxyvinyl)-alpha-D-glucosamine + phosphate. It participates in cell wall biogenesis; peptidoglycan biosynthesis. Its function is as follows. Cell wall formation. Adds enolpyruvyl to UDP-N-acetylglucosamine. The protein is UDP-N-acetylglucosamine 1-carboxyvinyltransferase of Rickettsia akari (strain Hartford).